A 281-amino-acid polypeptide reads, in one-letter code: Protein ZAR1-like 1.S (281 aa).

The 3CxxC-type zinc finger occupies 183–267 (QKYGFFQCKD…QDLCGRCKGQ (85 aa)).

Belongs to the ZAR1 family. As to quaternary structure, component of a cytoplasmic ribonucleoprotein complex together with eif4enif1/4E-T and cpeb1. In terms of tissue distribution, expressed in oocytes.

The protein resides in the cytoplasm. It is found in the cytoplasmic ribonucleoprotein granule. Its function is as follows. mRNA-binding protein required for maternal mRNA storage, translation and degradation during oocyte maturation. Controls timing of meiosis during oogenesis. Probably promotes formation of some phase-separated membraneless compartment that stores maternal mRNAs in oocytes: acts by undergoing liquid-liquid phase separation upon binding to maternal mRNAs. Binds to the 3'-UTR of maternal mRNAs, inhibiting their translation. The chain is Protein ZAR1-like 1.S from Xenopus laevis (African clawed frog).